A 320-amino-acid polypeptide reads, in one-letter code: Malate dehydrogenase (320 aa).

NAD(+) is bound by residues 10–15 (GSGMIG) and aspartate 34. Arginine 83 and arginine 89 together coordinate substrate. NAD(+) contacts are provided by residues asparagine 96 and 119-121 (ITN). Substrate-binding residues include asparagine 121 and arginine 152. The Proton acceptor role is filled by histidine 176.

The protein belongs to the LDH/MDH superfamily. MDH type 3 family.

It carries out the reaction (S)-malate + NAD(+) = oxaloacetate + NADH + H(+). In terms of biological role, catalyzes the reversible oxidation of malate to oxaloacetate. The polypeptide is Malate dehydrogenase (Brucella melitensis biotype 2 (strain ATCC 23457)).